A 533-amino-acid chain; its full sequence is Tryptophan 7-halogenase KtzQ (533 aa).

FAD is bound by residues glycine 14, threonine 16, alanine 17, alanine 40, glutamate 50, and alanine 51. Residue lysine 80 is part of the active site. Glutamate 359 serves as a coordination point for L-tryptophan. Threonine 361 and glycine 362 together coordinate chloride. Leucine 363 is an FAD binding site. Residues tyrosine 456, tyrosine 457, glutamate 463, and phenylalanine 467 each coordinate L-tryptophan.

Belongs to the flavin-dependent halogenase family. Bacterial tryptophan halogenase subfamily.

It carries out the reaction L-tryptophan + FADH2 + chloride + O2 = 7-chloro-L-tryptophan + FAD + 2 H2O. Involved in the biosynthesis of kutznerides, actinomycete-derived antifungal and antimicrobial cyclic hexadepsipeptides. Together with KtzR, catalyzes the regiospecific dichlorination of L-tryptophan (L-Trp) to produce 6,7-dichloro-L-tryptophan. KtzQ catalyzes the chlorination of L-Trp at C7 position to yield 7-chlorotryptophan. Can also use 6-chloro-L-tryptophan as substrate and form 6,7-dichloro-L-tryptophan, but has a preference for halogenation at the 7 position of unmodified L-Trp. Cannot use piperazic acid or gamma,delta-dehydropiperazic acid. In Kutzneria sp. (strain 744), this protein is Tryptophan 7-halogenase KtzQ.